Here is a 575-residue protein sequence, read N- to C-terminus: Lysine--tRNA ligase (575 aa).

Positions 412 and 419 each coordinate Mg(2+).

The protein belongs to the class-II aminoacyl-tRNA synthetase family. Homodimer. Requires Mg(2+) as cofactor.

It is found in the cytoplasm. It carries out the reaction tRNA(Lys) + L-lysine + ATP = L-lysyl-tRNA(Lys) + AMP + diphosphate. The sequence is that of Lysine--tRNA ligase from Bacteroides fragilis (strain ATCC 25285 / DSM 2151 / CCUG 4856 / JCM 11019 / LMG 10263 / NCTC 9343 / Onslow / VPI 2553 / EN-2).